Consider the following 99-residue polypeptide: SAGA-associated factor 11 (99 aa).

Residues 71-92 (IHCENCGRDVSANRLAAHLQRC) form an SGF11-type zinc finger.

Belongs to the SGF11 family. Component of the 1.8 MDa SAGA transcription coactivator-HAT complex. SAGA is built of 5 distinct domains with specialized functions. Within the SAGA complex, SUS1, SGF11, SGF73 and UBP8 form an additional subcomplex of SAGA called the DUB module (deubiquitination module). Interacts directly with SGF73, SUS1 and UBP8.

It is found in the nucleus. Functions as a component of the transcription regulatory histone acetylation (HAT) complex SAGA. At the promoters, SAGA is required for recruitment of the basal transcription machinery. It influences RNA polymerase II transcriptional activity through different activities such as TBP interaction and promoter selectivity, interaction with transcription activators, and chromatin modification through histone acetylation and deubiquitination. SAGA acetylates nucleosomal histone H3 to some extent (to form H3K9ac, H3K14ac, H3K18ac and H3K23ac). SAGA interacts with DNA via upstream activating sequences (UASs). Involved in transcriptional regulation of a subset of SAGA-regulated genes. Within the SAGA complex, participates in a subcomplex, that specifically deubiquitinates histones H2B. This chain is SAGA-associated factor 11, found in Saccharomyces cerevisiae (strain RM11-1a) (Baker's yeast).